The following is a 454-amino-acid chain: Phosphoglucosamine mutase (454 aa).

Catalysis depends on Ser104, which acts as the Phosphoserine intermediate. Mg(2+) is bound by residues Ser104, Asp247, Asp249, and Asp251. Ser104 is modified (phosphoserine).

It belongs to the phosphohexose mutase family. Mg(2+) serves as cofactor. Post-translationally, activated by phosphorylation.

The enzyme catalyses alpha-D-glucosamine 1-phosphate = D-glucosamine 6-phosphate. Catalyzes the conversion of glucosamine-6-phosphate to glucosamine-1-phosphate. The chain is Phosphoglucosamine mutase from Bifidobacterium animalis subsp. lactis (strain AD011).